Consider the following 382-residue polypeptide: MAAQRPLTIALVAGETSGDILGAGLIRALKARVPNARFVGVAGPRMQAEGCEAWYEMEELAVMGIVEVLGRLRRLLHIRADLTRRFTELKPDVFVGIDAPDFNITLEGNLKKKGIKTIHYVSPSVWAWRQKRVFKIGRSTHMVLAFLPFEKAFYDKFNVPCRFIGHTMADAMPLDPDKNAARDVLGIPHDAHCLALLPGSRGAEVEMLSADFLKTAQLLRQRYPDLEVVVPLVNAKRREQFEKIKAEVAPDLAVHLLDGMAREAMIASDAALLASGTAALECMLAKCPMVVGYRMKPFTFWLAKRLVKTEYVSLPNLLAGRELVKELLQEECEPQKLAEALLPLLANGKTSHAMHDTFRELHQQIRCNADEQAADAVLELAQ.

The protein belongs to the LpxB family.

It carries out the reaction 2-N,3-O-bis[(3R)-3-hydroxytetradecanoyl]-alpha-D-glucosaminyl 1-phosphate + UDP-2-N,3-O-bis[(3R)-3-hydroxytetradecanoyl]-alpha-D-glucosamine = lipid A disaccharide (E. coli) + UDP + H(+). The catalysed reaction is a lipid X + a UDP-2-N,3-O-bis[(3R)-3-hydroxyacyl]-alpha-D-glucosamine = a lipid A disaccharide + UDP + H(+). It functions in the pathway glycolipid biosynthesis; lipid IV(A) biosynthesis; lipid IV(A) from (3R)-3-hydroxytetradecanoyl-[acyl-carrier-protein] and UDP-N-acetyl-alpha-D-glucosamine: step 5/6. In terms of biological role, condensation of UDP-2,3-diacylglucosamine and 2,3-diacylglucosamine-1-phosphate to form lipid A disaccharide, a precursor of lipid A, a phosphorylated glycolipid that anchors the lipopolysaccharide to the outer membrane of the cell. This chain is Lipid-A-disaccharide synthase, found in Salmonella typhimurium (strain LT2 / SGSC1412 / ATCC 700720).